The primary structure comprises 345 residues: Glycerol-3-phosphate dehydrogenase [NAD(P)+] (345 aa).

Residues Ser11, Trp12, His32, Arg33, and Lys106 each coordinate NADPH. Lys106, Gly137, and Ser139 together coordinate sn-glycerol 3-phosphate. Position 141 (Ala141) interacts with NADPH. Positions 192, 245, 255, 256, and 257 each coordinate sn-glycerol 3-phosphate. Lys192 functions as the Proton acceptor in the catalytic mechanism. An NADPH-binding site is contributed by Arg256. NADPH contacts are provided by Val280 and Glu282.

It belongs to the NAD-dependent glycerol-3-phosphate dehydrogenase family.

The protein localises to the cytoplasm. The catalysed reaction is sn-glycerol 3-phosphate + NAD(+) = dihydroxyacetone phosphate + NADH + H(+). It catalyses the reaction sn-glycerol 3-phosphate + NADP(+) = dihydroxyacetone phosphate + NADPH + H(+). Its pathway is membrane lipid metabolism; glycerophospholipid metabolism. In terms of biological role, catalyzes the reduction of the glycolytic intermediate dihydroxyacetone phosphate (DHAP) to sn-glycerol 3-phosphate (G3P), the key precursor for phospholipid synthesis. This is Glycerol-3-phosphate dehydrogenase [NAD(P)+] from Bacillus pumilus (strain SAFR-032).